Consider the following 411-residue polypeptide: Tyrosine--tRNA ligase (411 aa).

Tyrosine 36 contributes to the L-tyrosine binding site. The short motif at 41–50 is the 'HIGH' region element; it reads PTADSLHVGH. Tyrosine 172 and glutamine 176 together coordinate L-tyrosine. A 'KMSKS' region motif is present at residues 232–236; sequence KMGKT. An ATP-binding site is contributed by lysine 235. The S4 RNA-binding domain maps to 344-409; the sequence is YSIANILVVT…GKKNHIKVII (66 aa).

Belongs to the class-I aminoacyl-tRNA synthetase family. TyrS type 1 subfamily. Homodimer.

It localises to the cytoplasm. It catalyses the reaction tRNA(Tyr) + L-tyrosine + ATP = L-tyrosyl-tRNA(Tyr) + AMP + diphosphate + H(+). Functionally, catalyzes the attachment of tyrosine to tRNA(Tyr) in a two-step reaction: tyrosine is first activated by ATP to form Tyr-AMP and then transferred to the acceptor end of tRNA(Tyr). The chain is Tyrosine--tRNA ligase from Malacoplasma penetrans (strain HF-2) (Mycoplasma penetrans).